A 152-amino-acid polypeptide reads, in one-letter code: Transposase for insertion sequence element IS200 (152 aa).

Mg(2+) is bound by residues His-61 and His-63. The active-site Nucleophile is the Tyr-125. Gln-129 lines the Mg(2+) pocket.

The protein belongs to the transposase 17 family. In terms of assembly, homodimer. The cofactor is Mg(2+).

In terms of biological role, transposase responsible for transposition of the IS200 insertion sequence (IS) element. Transposition occurs in 2 main steps, excision from the donor DNA 'top strand' into a single strand circle and its subsequent reinsertion into the DNA target. This increases the copy number of the IS. This Salmonella typhi protein is Transposase for insertion sequence element IS200 (tnpA1).